Consider the following 71-residue polypeptide: Small ribosomal subunit protein bS21 (71 aa).

It belongs to the bacterial ribosomal protein bS21 family.

This chain is Small ribosomal subunit protein bS21, found in Wigglesworthia glossinidia brevipalpis.